A 427-amino-acid chain; its full sequence is Enolase (427 aa).

Position 163 (glutamine 163) interacts with (2R)-2-phosphoglycerate. The active-site Proton donor is the glutamate 205. Aspartate 242, glutamate 285, and aspartate 312 together coordinate Mg(2+). Residues lysine 337, arginine 366, serine 367, and lysine 388 each contribute to the (2R)-2-phosphoglycerate site. Lysine 337 (proton acceptor) is an active-site residue.

The protein belongs to the enolase family. Mg(2+) is required as a cofactor.

It localises to the cytoplasm. It is found in the secreted. The protein localises to the cell surface. It catalyses the reaction (2R)-2-phosphoglycerate = phosphoenolpyruvate + H2O. It functions in the pathway carbohydrate degradation; glycolysis; pyruvate from D-glyceraldehyde 3-phosphate: step 4/5. Catalyzes the reversible conversion of 2-phosphoglycerate (2-PG) into phosphoenolpyruvate (PEP). It is essential for the degradation of carbohydrates via glycolysis. This chain is Enolase, found in Bradyrhizobium sp. (strain ORS 278).